The sequence spans 167 residues: Phosphopantetheine adenylyltransferase (167 aa).

Substrate is bound at residue Thr-10. ATP is bound by residues 10–11 (TF) and His-18. Positions 42, 75, and 89 each coordinate substrate. Residues 90–92 (GVR), Glu-100, and 125–131 (YTYVASS) contribute to the ATP site.

This sequence belongs to the bacterial CoaD family. Homohexamer. Mg(2+) is required as a cofactor.

The protein resides in the cytoplasm. It catalyses the reaction (R)-4'-phosphopantetheine + ATP + H(+) = 3'-dephospho-CoA + diphosphate. It participates in cofactor biosynthesis; coenzyme A biosynthesis; CoA from (R)-pantothenate: step 4/5. Reversibly transfers an adenylyl group from ATP to 4'-phosphopantetheine, yielding dephospho-CoA (dPCoA) and pyrophosphate. This Chlorobium phaeobacteroides (strain DSM 266 / SMG 266 / 2430) protein is Phosphopantetheine adenylyltransferase.